The chain runs to 432 residues: Amino-acid acetyltransferase (432 aa).

The region spanning 286 to 425 (ELVREAAIED…ASLYNFQRNS (140 aa)) is the N-acetyltransferase domain.

The protein belongs to the acetyltransferase family. ArgA subfamily.

The protein resides in the cytoplasm. It catalyses the reaction L-glutamate + acetyl-CoA = N-acetyl-L-glutamate + CoA + H(+). The protein operates within amino-acid biosynthesis; L-arginine biosynthesis; N(2)-acetyl-L-ornithine from L-glutamate: step 1/4. In Pseudomonas syringae pv. tomato (strain ATCC BAA-871 / DC3000), this protein is Amino-acid acetyltransferase.